Here is a 218-residue protein sequence, read N- to C-terminus: Glutathione S-transferase class-mu 26 kDa isozyme 7 (218 aa).

The region spanning 2-83 (PAKLGYWKIR…YIADKHGMLG (82 aa)) is the GST N-terminal domain. Residues 7-8 (YW), 41-45 (WLGDK), 54-55 (NL), and 67-68 (QS) each bind glutathione. In terms of domain architecture, GST C-terminal spans 85–203 (TPEERARISM…KSERFIKWPL (119 aa)). A substrate-binding site is contributed by Tyr111.

This sequence belongs to the GST superfamily. Mu family. As to quaternary structure, homodimer.

It carries out the reaction RX + glutathione = an S-substituted glutathione + a halide anion + H(+). Its function is as follows. Conjugation of reduced glutathione to a wide number of exogenous and endogenous hydrophobic electrophiles. Functionally, GST isoenzymes appear to play a central role in the parasite detoxification system. Other functions are also suspected including a role in increasing the solubility of haematin in the parasite gut. This is Glutathione S-transferase class-mu 26 kDa isozyme 7 from Fasciola hepatica (Liver fluke).